We begin with the raw amino-acid sequence, 1034 residues long: FERM domain-containing protein 4B (1034 aa).

An FERM domain is found at 59 to 361 (RHCQVHLLDD…SQHQFYLDRK (303 aa)). Phosphoserine is present on Ser-372. Coiled-coil stretches lie at residues 417 to 450 (EVSE…ELKK) and 531 to 561 (KKKR…RCGK). Residues 542–971 (MKKLQEIENA…TQLTIGLSDY (430 aa)) form a necessary for adherens junction and tight junction localization region. Residues 576–589 (PSESSSLSDTTTYD) show a composition bias toward low complexity. Disordered regions lie at residues 576–614 (PSES…ILPP), 635–698 (DTRQ…LESQ), 712–735 (FSLS…YTSQ), and 752–786 (TTQT…AQKD). Phosphoserine is present on Ser-608. Polar residues-rich tracts occupy residues 635 to 650 (DTRQ…SSPY) and 663 to 674 (MPTTPVLTRNAY). A compositionally biased stretch (low complexity) spans 675 to 685 (SSSHLEPESSS). The residue at position 697 (Ser-697) is a Phosphoserine. The span at 713–722 (SLSKSQRSSS) shows a compositional bias: low complexity. Residues 769–781 (QNVSTSNSGSMPN) show a composition bias toward polar residues. A Glycyl lysine isopeptide (Lys-Gly) (interchain with G-Cter in SUMO2) cross-link involves residue Lys-882. Disordered stretches follow at residues 905-925 (RASG…SDRG) and 1004-1034 (DGTD…GTLV). A compositionally biased stretch (polar residues) spans 906-920 (ASGQKDQGHSPQTSF). Ser-915 carries the post-translational modification Phosphoserine. The span at 1018 to 1034 (SEQRLFWHEDSKPGTLV) shows a compositional bias: basic and acidic residues. Residue Lys-1029 forms a Glycyl lysine isopeptide (Lys-Gly) (interchain with G-Cter in SUMO2) linkage.

As to quaternary structure, interacts with CYTH3. Interacts with PARD3. Interacts with CYTH1.

The protein localises to the cytoplasm. It is found in the cytoskeleton. The protein resides in the cell junction. Its subcellular location is the tight junction. It localises to the adherens junction. Functionally, member of GRP1 signaling complexes that are acutely recruited to plasma membrane ruffles in response to insulin receptor signaling. May function as a scaffolding protein that regulates epithelial cell polarity by connecting ARF6 activation with the PAR3 complex. Plays a redundant role with FRMD4A in epithelial polarization. This chain is FERM domain-containing protein 4B, found in Homo sapiens (Human).